We begin with the raw amino-acid sequence, 354 residues long: AT-rich binding protein (354 aa).

The C2H2-type 1 zinc finger occupies 31–54; sequence IVCHTCQEELQTQDKFWKHIQDEH. 2 disordered regions span residues 84–124 and 256–276; these read LPLY…HDDQ and EVQQ…SSAM. 2 stretches are compositionally biased toward basic and acidic residues: residues 89 to 100 and 109 to 124; these read KVSENDQQRDDV and QKEP…HDDQ. Positions 264–276 are enriched in low complexity; the sequence is TNNSTTASASSAM. C2H2-type zinc fingers lie at residues 285 to 309 and 315 to 338; these read YICD…RSVH and FACE…KKKH.

Homooctamer. In terms of tissue distribution, fat body.

It is found in the nucleus. In terms of biological role, may be a transcription factor for genes having (A+T) stretches in their promoter and/or enhancer regions. Binds to AT rich DNA. The sequence is that of AT-rich binding protein from Sarcophaga peregrina (Flesh fly).